The primary structure comprises 233 residues: SELSFNYPNFQSVEDITFQGGASPRNETLQLTPTDSNGIPIRQRAGHAVYSQPFQLRDTSFYTTFTFVIRTTSNSPADGFAIFIAPPDFPVKRYGGYLGLFEPNTATNTSANKVVAVEFDTWVNTEWKEPRYRHIGIDVNSIVSVRVTRWQDKDVFSRSIATAHVGYDGISKILTAFVTYPDGGNYVLSHVVDLAEIFPGDVRIGFSGATGQYETQYIHSWSFSSTSTNLLRD.

2 N-linked (GlcNAc...) asparagine glycosylation sites follow: N26 and N108. 2 residues coordinate Mn(2+): E118 and D120. Ca(2+) contacts are provided by D120, W122, N124, and E129. Mn(2+) is bound by residues E129 and H134.

This sequence belongs to the leguminous lectin family. As to quaternary structure, monomer.

The protein localises to the secreted. In terms of biological role, has metal-independent hemagglutinating activity towards erythrocytes from rabbit and human. Hemagglutinating activity is inhibited by glycoproteins fetuin, asialo-fetuin, thyroglobulin and azocasein but not by free carbohydrates. Inhibits ADP- and epinephrin-induced but not collagen-, fibrinogen, thrombin- or arachidonic acid-induced platelet aggregation in vitro. Has anticoagulant activity in vitro. The protein is Lectin of Bauhinia forficata (Brazilian orchid-tree).